The sequence spans 392 residues: Selenide, water dikinase 1 (392 aa).

Cys-31 is a catalytic residue. Residues Lys-32, 67–69 (GMD), Asp-87, Asp-110, and 161–164 (GGQT) each bind ATP. Position 69 (Asp-69) interacts with Mg(2+). Asp-110 serves as a coordination point for Mg(2+). Asp-265 is a Mg(2+) binding site.

Belongs to the selenophosphate synthase 1 family. Class II subfamily. In terms of assembly, homodimer. Mg(2+) is required as a cofactor.

The protein localises to the cell membrane. It is found in the nucleus membrane. The enzyme catalyses hydrogenselenide + ATP + H2O = selenophosphate + AMP + phosphate + 2 H(+). Functionally, synthesizes selenophosphate from selenide and ATP. This Xenopus tropicalis (Western clawed frog) protein is Selenide, water dikinase 1 (sephs1).